We begin with the raw amino-acid sequence, 78 residues long: ATP synthase subunit a (78 aa).

A helical transmembrane segment spans residues 34 to 54 (LTNIGLYLTIGIFLILTYSLL).

Belongs to the ATPase A chain family. As to quaternary structure, F-type ATPases have 2 components, CF(1) - the catalytic core - and CF(0) - the membrane proton channel. CF(1) has five subunits: alpha(3), beta(3), gamma(1), delta(1), epsilon(1). CF(0) has three main subunits: a, b and c.

The protein resides in the mitochondrion inner membrane. Functionally, mitochondrial membrane ATP synthase (F(1)F(0) ATP synthase or Complex V) produces ATP from ADP in the presence of a proton gradient across the membrane which is generated by electron transport complexes of the respiratory chain. F-type ATPases consist of two structural domains, F(1) - containing the extramembraneous catalytic core and F(0) - containing the membrane proton channel, linked together by a central stalk and a peripheral stalk. During catalysis, ATP synthesis in the catalytic domain of F(1) is coupled via a rotary mechanism of the central stalk subunits to proton translocation. Key component of the proton channel; it may play a direct role in the translocation of protons across the membrane. The chain is ATP synthase subunit a (atp6) from Aspergillus amstelodami.